Consider the following 216-residue polypeptide: Peptide deformylase (216 aa).

Residues cysteine 134 and histidine 178 each coordinate Fe cation. Glutamate 179 is an active-site residue. Fe cation is bound at residue histidine 182.

The protein belongs to the polypeptide deformylase family. Fe(2+) serves as cofactor.

The enzyme catalyses N-terminal N-formyl-L-methionyl-[peptide] + H2O = N-terminal L-methionyl-[peptide] + formate. Removes the formyl group from the N-terminal Met of newly synthesized proteins. Requires at least a dipeptide for an efficient rate of reaction. N-terminal L-methionine is a prerequisite for activity but the enzyme has broad specificity at other positions. This Mycoplasma pneumoniae (strain ATCC 29342 / M129 / Subtype 1) (Mycoplasmoides pneumoniae) protein is Peptide deformylase.